A 242-amino-acid chain; its full sequence is NAD-dependent protein deacetylase (242 aa).

In terms of domain architecture, Deacetylase sirtuin-type spans 1–242 (MQQFEEVRTI…EFVEGLSSIK (242 aa)). NAD(+) is bound by residues Ala-23, Thr-27, Phe-34, Arg-35, Gln-102, Ile-104, Asp-105, and His-120. A nicotinamide-binding site is contributed by Phe-34. The nicotinamide site is built by Ile-104 and Asp-105. His-120 functions as the Proton acceptor in the catalytic mechanism. 4 residues coordinate Zn(2+): Cys-128, Cys-131, Cys-148, and Cys-151. Positions 187, 188, 213, and 231 each coordinate NAD(+).

It belongs to the sirtuin family. Class U subfamily. Requires Zn(2+) as cofactor.

The protein localises to the cytoplasm. The catalysed reaction is N(6)-acetyl-L-lysyl-[protein] + NAD(+) + H2O = 2''-O-acetyl-ADP-D-ribose + nicotinamide + L-lysyl-[protein]. Its function is as follows. NAD-dependent protein deacetylase which modulates the activities of several enzymes which are inactive in their acetylated form. This is NAD-dependent protein deacetylase from Bacillus anthracis.